The sequence spans 146 residues: Cystatin-C (146 aa).

The first 26 residues, 1–26, serve as a signal peptide directing secretion; sequence MAGPLRAPLLLLAILAVALAVSPAAG. The residue at position 43 (S43) is a Phosphoserine. Residues 81 to 85 carry the Secondary area of contact motif; sequence QIVAG. Disulfide bonds link C99–C109 and C123–C143.

This sequence belongs to the cystatin family.

It is found in the secreted. As an inhibitor of cysteine proteinases, this protein is thought to serve an important physiological role as a local regulator of this enzyme activity. This Macaca mulatta (Rhesus macaque) protein is Cystatin-C (CST3).